The sequence spans 861 residues: Glucans biosynthesis glucosyltransferase H (861 aa).

2 disordered regions span residues 65–89 and 101–129; these read RLSA…SVGR and AGEP…SMVP. Basic and acidic residues-rich tracts occupy residues 67–76 and 105–114; these read SAREPAKGET and LLKRRPDGTV. 6 helical membrane-spanning segments follow: residues 181-201, 208-228, 532-552, 589-609, 616-636, and 698-718; these read FLLG…TKVL, LLEI…SAGF, VFLT…FLLL, LFSA…LLLV, GGLP…ALLA, and FVLW…LSVM.

Belongs to the glycosyltransferase 2 family. OpgH subfamily.

It is found in the cell inner membrane. Its pathway is glycan metabolism; osmoregulated periplasmic glucan (OPG) biosynthesis. Its function is as follows. Involved in the biosynthesis of osmoregulated periplasmic glucans (OPGs). The polypeptide is Glucans biosynthesis glucosyltransferase H (Cupriavidus pinatubonensis (strain JMP 134 / LMG 1197) (Cupriavidus necator (strain JMP 134))).